Consider the following 239-residue polypeptide: THAP domain-containing protein 3 (239 aa).

The THAP-type zinc-finger motif lies at 1–82 (MPKSCAARQC…LKHNAVPTVF (82 aa)). Disordered regions lie at residues 88–125 (PQLVRENTDPTGRSGDATSGERKVLPETGSGECGLGRK) and 139–174 (VGGLGAQVPPHTPETSGVPGQPASPPELKRRLPTQP). An HCFC1-binding motif (HBM) motif is present at residues 176-179 (DHSY).

As to quaternary structure, component of a THAP1/THAP3-HCFC1-OGT complex that contains at least, either THAP1 or THAP3, HCFC1 and OGT. Interacts directly with OGT and HCFC1 (via its HBM).

In terms of biological role, component of a THAP1/THAP3-HCFC1-OGT complex that is required for the regulation of the transcriptional activity of RRM1. The polypeptide is THAP domain-containing protein 3 (THAP3) (Bos taurus (Bovine)).